The following is a 376-amino-acid chain: uncharacterized protein (376 aa).

Composition is skewed to low complexity over residues 73-99 and 228-243; these read NNSI…NNNN and SSFS…TVSS. Disordered regions lie at residues 73–100 and 222–269; these read NNSI…NNNL and EQDP…KISD.

This is an uncharacterized protein from Saccharomyces cerevisiae (strain ATCC 204508 / S288c) (Baker's yeast).